The primary structure comprises 258 residues: Small ribosomal subunit protein mS40 (258 aa).

The transit peptide at 1-35 (MAASVLNTLLRRLPMLSLFRGAHRVQVPLQTLCTK) directs the protein to the mitochondrion. 2 positions are modified to phosphoserine: Ser-38 and Ser-49. The interval 218–258 (RLYQGHLREESGPPPESMPKMPPTAPAEASFTGQTDPQSAL) is disordered. A compositionally biased stretch (pro residues) spans 229–242 (GPPPESMPKMPPTA). Over residues 248–258 (FTGQTDPQSAL) the composition is skewed to polar residues.

It belongs to the bacterial ribosomal protein bS18 family. Mitochondrion-specific ribosomal protein mS40 subfamily. Component of the mitochondrial ribosome small subunit (28S) which comprises a 12S rRNA and about 30 distinct proteins.

The protein resides in the mitochondrion. The sequence is that of Small ribosomal subunit protein mS40 (MRPS18B) from Macaca mulatta (Rhesus macaque).